We begin with the raw amino-acid sequence, 108 residues long: UPF0145 protein Tmel_1129 (108 aa).

Belongs to the UPF0145 family.

This chain is UPF0145 protein Tmel_1129, found in Thermosipho melanesiensis (strain DSM 12029 / CIP 104789 / BI429).